The chain runs to 207 residues: NAD(P)H dehydrogenase (quinone) (207 aa).

The Flavodoxin-like domain maps to 3–194 (VQIIFYSMYG…EMAKFQGRHV (192 aa)). Residues 9-14 (SMYGHI) and 82-84 (TRF) contribute to the FMN site. Position 11 (Tyr11) interacts with NAD(+). Trp102 is a substrate binding site. FMN contacts are provided by residues 117 to 123 (STATQHG) and His138.

Belongs to the WrbA family. The cofactor is FMN.

It catalyses the reaction a quinone + NADH + H(+) = a quinol + NAD(+). It carries out the reaction a quinone + NADPH + H(+) = a quinol + NADP(+). The chain is NAD(P)H dehydrogenase (quinone) from Aromatoleum aromaticum (strain DSM 19018 / LMG 30748 / EbN1) (Azoarcus sp. (strain EbN1)).